The primary structure comprises 267 residues: LysM and putative peptidoglycan-binding domain-containing protein 4 (267 aa).

At 1–211 (MRRGDPPPRA…RSNGADWGIQ (211 aa)) the chain is on the extracellular side. Residues 30–64 (HRQEEPEASSEDEELNVMELRPRSRDSSSKEKEGV) are disordered. Over residues 35–45 (PEASSEDEELN) the composition is skewed to acidic residues. Over residues 49-64 (LRPRSRDSSSKEKEGV) the composition is skewed to basic and acidic residues. Residues 70–114 (LERDISHEDNLSKLALQYGCKVADIKRVNNLFQEQDMYALKSIKI) form the LysM domain. Residue N79 is glycosylated (N-linked (GlcNAc...) asparagine). The interval 130 to 152 (RTPQQRPSHDAAPSNSAMASVSG) is disordered. Residues 142–152 (PSNSAMASVSG) are compositionally biased toward polar residues. The chain crosses the membrane as a helical span at residues 212–232 (WWNAVIAMLLIGIVLPIFYVV). Residues 233 to 267 (YYKTKDSGESAVDNVGVNISVSTSNSTREYNGKSP) are Cytoplasmic-facing.

The protein resides in the membrane. The protein is LysM and putative peptidoglycan-binding domain-containing protein 4 (lysmd4) of Danio rerio (Zebrafish).